Here is a 1124-residue protein sequence, read N- to C-terminus: Zinc finger E-box-binding homeobox 1 (1124 aa).

Disordered stretches follow at residues 1–124 (MADG…NHDP) and 142–163 (APEE…NGTP). A compositionally biased stretch (low complexity) spans 18–30 (NNVTNYNTVVETN). A phosphoserine mark is found at Ser-31 and Ser-33. Positions 44 to 62 (EESVTDAADCEGVPEDDLP) are enriched in acidic residues. Basic and acidic residues predominate over residues 72 to 91 (SSEREGNAKNCWEDDRKEGQ). Residues 170–193 (LTCPYCDRGYKRFTSLKEHIKYRH) form a C2H2-type 1 zinc finger. Glycyl lysine isopeptide (Lys-Gly) (interchain with G-Cter in SUMO2) cross-links involve residues Lys-186 and Lys-195. C2H2-type zinc fingers lie at residues 200-222 (FSCS…MTSH) and 240-262 (FKCT…LRIH). The segment at 268-292 (YECPNCKKRFSHSGSYSSHISSKKC) adopts a C2H2-type 4; atypical zinc-finger fold. Positions 304 to 327 (TGLKTSQCSSPSLSASPGSPTRPQ) are disordered. Residue Lys-307 forms a Glycyl lysine isopeptide (Lys-Gly) (interchain with G-Cter in SUMO2) linkage. Residues 309–322 (SQCSSPSLSASPGS) are compositionally biased toward low complexity. Phosphoserine is present on residues Ser-313 and Ser-322. Residues Lys-331 and Lys-335 each participate in a glycyl lysine isopeptide (Lys-Gly) (interchain with G-Cter in SUMO2) cross-link. Residue Lys-347 forms a Glycyl lysine isopeptide (Lys-Gly) (interchain with G-Cter in SUMO); alternate linkage. Residue Lys-347 forms a Glycyl lysine isopeptide (Lys-Gly) (interchain with G-Cter in SUMO2); alternate linkage. Residues Lys-439, Lys-493, Lys-504, Lys-515, Lys-548, and Lys-553 each participate in a glycyl lysine isopeptide (Lys-Gly) (interchain with G-Cter in SUMO2) cross-link. 2 disordered regions span residues 551–586 (DLKQ…SPSQ) and 636–714 (QISV…SSSR). The homeobox; atypical DNA-binding region spans 581–640 (NLSPSQPPLKNLLSLLKAYYALNAQPSAEELSKIADSVNLPLDVVKKWFEKMQAGQISVQ). A phosphoserine mark is found at Ser-642, Ser-679, Ser-686, Ser-693, and Ser-700. Residues 656–687 (AKNNDQPQSANANEPQDSTVNLQSPLKMTNSP) show a composition bias toward polar residues. The segment covering 692–714 (GSTTNGSRSSTPSPSPLNLSSSR) has biased composition (low complexity). Thr-702 carries the post-translational modification Phosphothreonine. Position 704 is a phosphoserine (Ser-704). Lys-774 is covalently cross-linked (Glycyl lysine isopeptide (Lys-Gly) (interchain with G-Cter in SUMO); alternate). A Glycyl lysine isopeptide (Lys-Gly) (interchain with G-Cter in SUMO2); alternate cross-link involves residue Lys-774. The tract at residues 856-898 (PPLKVIQPNGNQDERQDTSSEGVSNVEDQNDSDSTPPKKKMRK) is disordered. The segment covering 874 to 890 (SSEGVSNVEDQNDSDST) has biased composition (polar residues). 2 C2H2-type zinc fingers span residues 904–926 (YACD…KYEH) and 932–954 (HECG…MRLH). The segment at 960-981 (YQCDKCGKRFSHSGSYSQHMNH) adopts a C2H2-type 7; atypical zinc-finger fold. The segment at 989–1124 (EAEERDSTEQ…QVSEEKTNEA (136 aa)) is disordered. Composition is skewed to acidic residues over residues 1031 to 1052 (EEDE…ELQE) and 1062 to 1084 (DEEE…ENEG). Residues 1085-1099 (EEAKTEGLMKDDRAE) are compositionally biased toward basic and acidic residues. The segment covering 1100–1115 (SQASSLGQKVGESSEQ) has biased composition (polar residues).

It belongs to the delta-EF1/ZFH-1 C2H2-type zinc-finger family. In terms of assembly, interacts (via N-terminus) with SMARCA4/BRG1. In terms of processing, ubiquitinated, leading to degradation in a proteasome-dependent manner. Deubiquitinated by USP51, leading to stabilization. Colocalizes with SMARCA4/BRG1 in E-cadherin-negative cells from established lines, and stroma of normal colon as well as in de-differentiated epithelial cells at the invasion front of colorectal carcinomas (at protein level). Expressed in heart and skeletal muscle, but not in liver, spleen, or pancreas.

The protein localises to the nucleus. Acts as a transcriptional repressor. Inhibits interleukin-2 (IL-2) gene expression. Enhances or represses the promoter activity of the ATP1A1 gene depending on the quantity of cDNA and on the cell type. Represses E-cadherin promoter and induces an epithelial-mesenchymal transition (EMT) by recruiting SMARCA4/BRG1. Represses BCL6 transcription in the presence of the corepressor CTBP1. Positively regulates neuronal differentiation. Represses RCOR1 transcription activation during neurogenesis. Represses transcription by binding to the E box (5'-CANNTG-3'). In the absence of TGFB1, acts as a repressor of COL1A2 transcription via binding to the E-box in the upstream enhancer region. The protein is Zinc finger E-box-binding homeobox 1 of Homo sapiens (Human).